A 799-amino-acid chain; its full sequence is Potassium transporter 21 (799 aa).

Over 1 to 56 (MDPGVEKKKQQMELVDVESGGLPVERQDSLFREAVRAEHAGAAHWDEQDSWGRTMS) the chain is Cytoplasmic. Residues 57 to 77 (LAFQCVGILYGDIGTSSLYVY) traverse the membrane as a helical segment. Residues 78–93 (SSTFEHGIGHPDDVVG) are Extracellular-facing. Residues 94–114 (VLSLIVYSFMLFTVIKIVFVA) traverse the membrane as a helical segment. Over 115-181 (LHANDHGDGG…QLLEASKAAK (67 aa)) the chain is Cytoplasmic. The chain crosses the membrane as a helical span at residues 182–202 (ISLFLLTILAIAMVISDAVLT). Topologically, residues 203–219 (PPISVLSAVGGLREKVP) are extracellular. Residues 220–240 (HLTTDQIVWITVAILVVLFAI) traverse the membrane as a helical segment. The Cytoplasmic portion of the chain corresponds to 241-251 (QRYGTDKVGYS). The helical transmembrane segment at 252-272 (FAPIILLWLLLIGATGLYNLI) threads the bilayer. Over 273 to 301 (KHDISVLRAFNPKYIIDYFRRNKKEGWVS) the chain is Extracellular. The chain crosses the membrane as a helical span at residues 302 to 322 (LGSILLCFTGSEALFANLGYF). At 323 to 328 (SIRSIQ) the chain is on the cytoplasmic side. The helical transmembrane segment at 329–349 (LSFSFALLPSVLLTYIGQAAF) threads the bilayer. Residues 350–362 (LSKNPKNVANTFF) lie on the Extracellular side of the membrane. Residues 363 to 383 (AATPISLFWPTFIMAIAASII) form a helical membrane-spanning segment. Topologically, residues 384–420 (GSQAMISCAFATVSHLQSLSCFPRVKILHTSKRFPGQ) are cytoplasmic. The chain crosses the membrane as a helical span at residues 421–441 (LYIPGVNFLLCVAACVVTVSF). Over 442-452 (KTTVIIGKAHE) the chain is Extracellular. Residues 453-473 (ICVILVMIITTLLMTIVMLLV) form a helical membrane-spanning segment. Over 474 to 475 (WK) the chain is Cytoplasmic. Residues 476-496 (INILWVALFFITFTSTEAVYL) form a helical membrane-spanning segment. At 497-508 (SSVLYKFTHGPY) the chain is on the extracellular side. Residues 509 to 529 (VPVAMSVVLMVVMIVWHYVHV) traverse the membrane as a helical segment. Topologically, residues 530 to 799 (KRYKYELEHT…LLKVGISYEI (270 aa)) are cytoplasmic.

It belongs to the HAK/KUP transporter (TC 2.A.72.3) family.

The protein localises to the membrane. High-affinity potassium transporter. In Oryza sativa subsp. japonica (Rice), this protein is Potassium transporter 21 (HAK21).